Here is a 603-residue protein sequence, read N- to C-terminus: MRRKEKRLLQAVALVLAALVLLPNVGLWALYRERQPDGTPGGSGAAVAPAAGQGSHSRQKKTFFLGDGQKLKDWHDKEAIRRDAQRVGNGEQGRPYPMTDAERVDQAYRENGFNIYVSDKISLNRSLPDIRHPNCNSKRYLETLPNTSIIIPFHNEGWSSLLRTVHSVLNRSPPELVAEIVLVDDFSDREHLKKPLEDYMALFPSVRILRTKKREGLIRTRMLGASVATGDVITFLDSHCEANVNWLPPLLDRIARNRKTIVCPMIDVIDHDDFRYETQAGDAMRGAFDWEMYYKRIPIPPELQKADPSDPFESPVMAGGLFAVDRKWFWELGGYDPGLEIWGGEQYEISFKVWMCGGRMEDIPCSRVGHIYRKYVPYKVPAGVSLARNLKRVAEVWMDEYAEYIYQRRPEYRHLSAGDVAVQKKLRSSLNCKSFKWFMTKIAWDLPKFYPPVEPPAAAWGEIRNVGTGLCADTKHGALGSPLRLEGCVRGRGEAAWNNMQVFTFTWREDIRPGDPQHTKKFCFDAISHTSPVTLYDCHSMKGNQLWKYRKDKTLYHPVSGSCMDCSESDHRIFMNTCNPSSLTQQWLFEHTNSTVLEKFNRN.

Topologically, residues 1-11 are cytoplasmic; that stretch reads MRRKEKRLLQA. A helical; Signal-anchor for type II membrane protein transmembrane segment spans residues 12–31; it reads VALVLAALVLLPNVGLWALY. Residues 32-603 are Lumenal-facing; that stretch reads RERQPDGTPG…STVLEKFNRN (572 aa). Positions 38–59 are disordered; the sequence is GTPGGSGAAVAPAAGQGSHSRQ. Positions 45–55 are enriched in low complexity; that stretch reads AAVAPAAGQGS. Residues asparagine 124 and asparagine 146 are each glycosylated (N-linked (GlcNAc...) asparagine). 5 disulfides stabilise this stretch: cysteine 135-cysteine 365, cysteine 356-cysteine 432, cysteine 471-cysteine 488, cysteine 523-cysteine 538, and cysteine 563-cysteine 578. The interval 144 to 253 is catalytic subdomain A; the sequence is LPNTSIIIPF…VNWLPPLLDR (110 aa). 4 residues coordinate substrate: histidine 154, glutamate 156, aspartate 185, and arginine 214. Aspartate 237 is a Mn(2+) binding site. Position 238 (serine 238) interacts with substrate. Histidine 239 provides a ligand contact to Mn(2+). Residues 311-373 are catalytic subdomain B; it reads PFESPVMAGG…PCSRVGHIYR (63 aa). Residue tryptophan 342 coordinates substrate. A Mn(2+)-binding site is contributed by histidine 370. Substrate contacts are provided by arginine 373 and tyrosine 378. Residues 373-384 are flexible loop; it reads RKYVPYKVPAGV. The Ricin B-type lectin domain maps to 458 to 590; it reads AAWGEIRNVG…SSLTQQWLFE (133 aa). N-linked (GlcNAc...) asparagine glycosylation occurs at asparagine 593.

This sequence belongs to the glycosyltransferase 2 family. GalNAc-T subfamily. It depends on Mn(2+) as a cofactor. Widely expressed. Expressed at high level in small intestine, and at intermediate levels in stomach, pancreas, ovary, thyroid gland and spleen. Weakly expressed in other tissues.

Its subcellular location is the golgi apparatus membrane. The enzyme catalyses L-seryl-[protein] + UDP-N-acetyl-alpha-D-galactosamine = a 3-O-[N-acetyl-alpha-D-galactosaminyl]-L-seryl-[protein] + UDP + H(+). It carries out the reaction L-threonyl-[protein] + UDP-N-acetyl-alpha-D-galactosamine = a 3-O-[N-acetyl-alpha-D-galactosaminyl]-L-threonyl-[protein] + UDP + H(+). Its pathway is protein modification; protein glycosylation. Its function is as follows. Catalyzes the initial reaction in O-linked oligosaccharide biosynthesis, the transfer of an N-acetyl-D-galactosamine residue to a serine or threonine residue on the protein receptor. Has activity toward Muc5Ac and EA2 peptide substrates. The polypeptide is Polypeptide N-acetylgalactosaminyltransferase 10 (GALNT10) (Homo sapiens (Human)).